A 148-amino-acid chain; its full sequence is Large ribosomal subunit protein uL15 (148 aa).

A disordered region spans residues 1–61 (MELNELRPAV…GGQMPMQRRL (61 aa)). Over residues 30–39 (TATKGHKGQK) the composition is skewed to basic residues.

The protein belongs to the universal ribosomal protein uL15 family. In terms of assembly, part of the 50S ribosomal subunit.

Binds to the 23S rRNA. In Geobacter sulfurreducens (strain ATCC 51573 / DSM 12127 / PCA), this protein is Large ribosomal subunit protein uL15.